A 301-amino-acid polypeptide reads, in one-letter code: MSSNIEPQTTAKCILYTTKGNIAIELWAKECPETCKRFLSMLSDGTFTNGEFKELKPTQWLMFNANSTGEYRTVAEEKNPRIRFNRDGLLGWDRRRNTWFITVLADSKHVLNDCNVFGKIVGKSIYIFREILGGEIEASSRDNDVKRFMYPAVLKDVEITIPFFEDIFGSKRRLEDNEKKEQEPAKKLVKSAKVKMVYEDEQEDDDGDVQKLKPRKRMILPAWIKDDSRSEGIKLDASLDQPQEALIREKTELHDNVDEATTKETESQENIKEEPMDKRERETLAMLSKFQERIKNKNILK.

A PPIase cyclophilin-type domain is found at 9-159 (TTAKCILYTT…YPAVLKDVEI (151 aa)). Residues 251–280 (TELHDNVDEATTKETESQENIKEEPMDKRE) are disordered.

It belongs to the cyclophilin-type PPIase family. CWC27 subfamily. Belongs to the CWC complex (or CEF1-associated complex), a spliceosome subcomplex composed of the U2, U5 and U6 snRNAs and at least BUD13, BUD31, BRR2, CDC40, CEF1, CLF1, CUS1, CWC2, CWC15, CWC21, CWC22, CWC23, CWC24, CWC25, CWC27, ECM2, HSH155, IST3, ISY1, LEA1, MSL1, NTC20, PRP8, PRP9, PRP11, PRP19, PRP21, PRP22, PRP45, PRP46, SLU7, SMB1, SMD1, SMD2, SMD3, SMX2, SMX3, SNT309, SNU114, SPP2, SYF1, SYF2, RSE1 and YJU2.

Its subcellular location is the cytoplasm. The protein resides in the nucleus. The catalysed reaction is [protein]-peptidylproline (omega=180) = [protein]-peptidylproline (omega=0). PPIases accelerate the folding of proteins. Catalyzes the cis-trans isomerization of proline imidic peptide bonds in oligopeptides. Involved in pre-mRNA splicing. The polypeptide is Peptidyl-prolyl isomerase CWC27 (CWC27) (Saccharomyces cerevisiae (strain ATCC 204508 / S288c) (Baker's yeast)).